Here is a 384-residue protein sequence, read N- to C-terminus: MKRISILGVTGSIGTQTLDVLRFHKEDFELVGITANRNIELTMDIIKEFSPKYVAINHEESYKKLVDLVKSQGLKCEVIYGMEGLVKVATLDEIDIVVTSVVGMIGLKPTVEAIRKGKDIALANKETLVVAGELVMREAKENGVKILPVDSEHSAIFQSLQGNAHNKIDKILLTASGGPFRGFTIEDLKSVTPERALKHPKWNMGQKISIDSSTLMNKGLEVIEAHWLFDCPYKDIEVVVHPQSIIHSMVQYTDGAVIAQLGVPDMKLPIQYALNYPNRQGNISEKLDLFKIRELTFEKPDLDTFKCLKLAYEAGEKGKLMPTILNGANEVCVELFLNKKITYLQIPEIIEECMNTFDYNKEVTLHNVINLDKEVRQYIYEKYN.

NADPH-binding residues include Thr-10, Gly-11, Ser-12, Ile-13, Arg-37, Asn-38, and Asn-124. Lys-125 lines the 1-deoxy-D-xylulose 5-phosphate pocket. Residue Glu-126 coordinates NADPH. Residue Asp-150 coordinates Mn(2+). Residues Ser-151, Glu-152, Ser-176, and His-199 each contribute to the 1-deoxy-D-xylulose 5-phosphate site. Glu-152 contacts Mn(2+). NADPH is bound at residue Gly-205. Residues Ser-212, Asn-217, Lys-218, and Glu-221 each contribute to the 1-deoxy-D-xylulose 5-phosphate site. Mn(2+) is bound at residue Glu-221.

The protein belongs to the DXR family. Mg(2+) is required as a cofactor. It depends on Mn(2+) as a cofactor.

It carries out the reaction 2-C-methyl-D-erythritol 4-phosphate + NADP(+) = 1-deoxy-D-xylulose 5-phosphate + NADPH + H(+). The protein operates within isoprenoid biosynthesis; isopentenyl diphosphate biosynthesis via DXP pathway; isopentenyl diphosphate from 1-deoxy-D-xylulose 5-phosphate: step 1/6. In terms of biological role, catalyzes the NADPH-dependent rearrangement and reduction of 1-deoxy-D-xylulose-5-phosphate (DXP) to 2-C-methyl-D-erythritol 4-phosphate (MEP). The sequence is that of 1-deoxy-D-xylulose 5-phosphate reductoisomerase from Clostridium perfringens (strain ATCC 13124 / DSM 756 / JCM 1290 / NCIMB 6125 / NCTC 8237 / Type A).